We begin with the raw amino-acid sequence, 297 residues long: Pyridoxal 5'-phosphate synthase subunit PdxS (297 aa).

A D-ribose 5-phosphate-binding site is contributed by D27. The Schiff-base intermediate with D-ribose 5-phosphate role is filled by K84. G156 is a D-ribose 5-phosphate binding site. R168 provides a ligand contact to D-glyceraldehyde 3-phosphate. D-ribose 5-phosphate-binding positions include G217 and 238 to 239; that span reads GS.

The protein belongs to the PdxS/SNZ family. As to quaternary structure, in the presence of PdxT, forms a dodecamer of heterodimers.

The catalysed reaction is aldehydo-D-ribose 5-phosphate + D-glyceraldehyde 3-phosphate + L-glutamine = pyridoxal 5'-phosphate + L-glutamate + phosphate + 3 H2O + H(+). It functions in the pathway cofactor biosynthesis; pyridoxal 5'-phosphate biosynthesis. Catalyzes the formation of pyridoxal 5'-phosphate from ribose 5-phosphate (RBP), glyceraldehyde 3-phosphate (G3P) and ammonia. The ammonia is provided by the PdxT subunit. Can also use ribulose 5-phosphate and dihydroxyacetone phosphate as substrates, resulting from enzyme-catalyzed isomerization of RBP and G3P, respectively. The polypeptide is Pyridoxal 5'-phosphate synthase subunit PdxS (Corynebacterium efficiens (strain DSM 44549 / YS-314 / AJ 12310 / JCM 11189 / NBRC 100395)).